Reading from the N-terminus, the 653-residue chain is Exocyst complex component 7 (653 aa).

Positions 1–384 are SEC8 and ARHQ binding; sequence MIPPQEASAR…TKNKLPGLIT (384 aa). Coiled-coil stretches lie at residues 5 to 42 and 63 to 85; these read QEAS…TKNM and VHKQ…SCLD. At Ser133 the chain carries Phosphoserine. A disordered region spans residues 238–272; the sequence is FRKSSSSSGVPYSPAIPNKRKDTPTKKPIKRPGRD.

Belongs to the EXO70 family. As to quaternary structure, the exocyst complex is composed of EXOC1, EXOC2, EXOC3, EXOC4, EXOC5, EXOC6, EXOC7 and EXOC8. Interacts with ARHQ in a GTP-dependent manner. Interacts with RAB11FIP3.

It is found in the cytoplasm. The protein localises to the cytosol. The protein resides in the cell membrane. Its subcellular location is the midbody. It localises to the midbody ring. Component of the exocyst complex involved in the docking of exocytic vesicles with fusion sites on the plasma membrane. In adipocytes, plays a crucial role in targeting SLC2A4 vesicle to the plasma membrane in response to insulin, perhaps directing the vesicle to the precise site of fusion. It is required for neuron survival and plays an essential role in cortical development. The sequence is that of Exocyst complex component 7 (Exoc7) from Rattus norvegicus (Rat).